The primary structure comprises 66 residues: MMSKLGALLTICLLLFPLTAVPLDGDQPLDRHAERMHDGISPKRHPWFDPVKRCCKVQCESCTPCC.

A signal peptide spans 1 to 20; sequence MMSKLGALLTICLLLFPLTA. Positions 21 to 53 are excised as a propeptide; sequence VPLDGDQPLDRHAERMHDGISPKRHPWFDPVKR. 3 disulfides stabilise this stretch: cysteine 54-cysteine 66, cysteine 55-cysteine 62, and cysteine 59-cysteine 65. A 4-hydroxyproline modification is found at proline 64.

It belongs to the conotoxin M superfamily. As to expression, expressed by the venom duct.

The protein localises to the secreted. This Conus litteratus (Lettered cone) protein is Conotoxin Lt3.5.